Consider the following 741-residue polypeptide: uncharacterized protein (741 aa).

Residues 64–103 (VETLLCMLEQLTIRIEFLTKEIAQQEAAYKDIQNTQKSLV) adopt a coiled-coil conformation. Polar residues predominate over residues 137-155 (FERQNRTAPLQSKVTTASL). 3 disordered regions span residues 137–214 (FERQ…TGLP), 280–318 (RTYS…SKSS), and 330–364 (SVSS…FLTP). 2 stretches are compositionally biased toward low complexity: residues 161–173 (RTSM…ASRT) and 197–209 (KSKS…KSLA). Positions 298–308 (SHLPNRTTEVP) are enriched in polar residues. 2 stretches are compositionally biased toward low complexity: residues 309-318 (SISKQLSKSS) and 330-344 (SVSS…TPQS). Positions 346-356 (PRAQSASTETA) are enriched in polar residues. 499 to 506 (GPPGTGKT) lines the ATP pocket.

The protein belongs to the AAA ATPase family.

Its subcellular location is the cytoplasm. The protein localises to the nucleus. This is an uncharacterized protein from Schizosaccharomyces pombe (strain 972 / ATCC 24843) (Fission yeast).